Consider the following 111-residue polypeptide: Cornifelin (111 aa).

It belongs to the cornifelin family. As to quaternary structure, directly or indirectly cross-linked to CE proteins loricin and involucrin (IVL).

It localises to the cytoplasm. In terms of biological role, part of the insoluble cornified cell envelope (CE) of stratified squamous epithelia. This chain is Cornifelin (CNFN), found in Bos taurus (Bovine).